The following is a 237-amino-acid chain: Ribonuclease PH (237 aa).

Phosphate-binding positions include Arg86 and 124 to 126 (GTR).

It belongs to the RNase PH family. As to quaternary structure, homohexameric ring arranged as a trimer of dimers.

It catalyses the reaction tRNA(n+1) + phosphate = tRNA(n) + a ribonucleoside 5'-diphosphate. In terms of biological role, phosphorolytic 3'-5' exoribonuclease that plays an important role in tRNA 3'-end maturation. Removes nucleotide residues following the 3'-CCA terminus of tRNAs; can also add nucleotides to the ends of RNA molecules by using nucleoside diphosphates as substrates, but this may not be physiologically important. Probably plays a role in initiation of 16S rRNA degradation (leading to ribosome degradation) during starvation. The polypeptide is Ribonuclease PH (Coxiella burnetii (strain RSA 331 / Henzerling II)).